The sequence spans 875 residues: Leucine--tRNA ligase (875 aa).

The span at 1 to 20 (MPSAGSVNAANPAVDTSAQT) shows a compositional bias: polar residues. The disordered stretch occupies residues 1–22 (MPSAGSVNAANPAVDTSAQTGR). The short motif at 60–70 (PYPSGSLHMGH) is the 'HIGH' region element. Residues 634–638 (KMSKS) carry the 'KMSKS' region motif. K637 is an ATP binding site.

This sequence belongs to the class-I aminoacyl-tRNA synthetase family.

Its subcellular location is the cytoplasm. It catalyses the reaction tRNA(Leu) + L-leucine + ATP = L-leucyl-tRNA(Leu) + AMP + diphosphate. This is Leucine--tRNA ligase from Synechococcus sp. (strain CC9605).